Here is a 115-residue protein sequence, read N- to C-terminus: T cell receptor beta variable 2 (115 aa).

Positions 1-19 (MDTWLVCWAIFSLLKAGLT) are cleaved as a signal peptide. An Ig-like domain is found at 21–115 (PEVTQTPSHQ…SAMYFCASSE (95 aa)). Cysteine 42 and cysteine 111 are oxidised to a cystine. Asparagine 93 carries N-linked (GlcNAc...) asparagine glycosylation.

As to quaternary structure, alpha-beta TR is a heterodimer composed of an alpha and beta chain; disulfide-linked. The alpha-beta TR is associated with the transmembrane signaling CD3 coreceptor proteins to form the TR-CD3 (TcR or TCR). The assembly of alpha-beta TR heterodimers with CD3 occurs in the endoplasmic reticulum where a single alpha-beta TR heterodimer associates with one CD3D-CD3E heterodimer, one CD3G-CD3E heterodimer and one CD247 homodimer forming a stable octameric structure. CD3D-CD3E and CD3G-CD3E heterodimers preferentially associate with TR alpha and TR beta chains, respectively. The association of the CD247 homodimer is the last step of TcR assembly in the endoplasmic reticulum and is required for transport to the cell surface.

It localises to the cell membrane. Its function is as follows. V region of the variable domain of T cell receptor (TR) beta chain that participates in the antigen recognition. Alpha-beta T cell receptors are antigen specific receptors which are essential to the immune response and are present on the cell surface of T lymphocytes. Recognize peptide-major histocompatibility (MH) (pMH) complexes that are displayed by antigen presenting cells (APC), a prerequisite for efficient T cell adaptive immunity against pathogens. Binding of alpha-beta TR to pMH complex initiates TR-CD3 clustering on the cell surface and intracellular activation of LCK that phosphorylates the ITAM motifs of CD3G, CD3D, CD3E and CD247 enabling the recruitment of ZAP70. In turn ZAP70 phosphorylates LAT, which recruits numerous signaling molecules to form the LAT signalosome. The LAT signalosome propagates signal branching to three major signaling pathways, the calcium, the mitogen-activated protein kinase (MAPK) kinase and the nuclear factor NF-kappa-B (NF-kB) pathways, leading to the mobilization of transcription factors that are critical for gene expression and essential for T cell growth and differentiation. The T cell repertoire is generated in the thymus, by V-(D)-J rearrangement. This repertoire is then shaped by intrathymic selection events to generate a peripheral T cell pool of self-MH restricted, non-autoaggressive T cells. Post-thymic interaction of alpha-beta TR with the pMH complexes shapes TR structural and functional avidity. This Homo sapiens (Human) protein is T cell receptor beta variable 2.